We begin with the raw amino-acid sequence, 393 residues long: Protein Njmu-R1 (393 aa).

Residues 1–74 (MLPSLQESLD…AETPSGDDFS (74 aa)) are disordered. Phosphoserine occurs at positions 8 and 18. Residues 9–24 (LDGDEKELESSEEGGS) show a composition bias toward acidic residues.

In terms of assembly, interacts with TBC1D23; this interaction may be indirect.

Functionally, may have a role in spermatogenesis. The sequence is that of Protein Njmu-R1 from Mus musculus (Mouse).